A 288-amino-acid chain; its full sequence is Phenazine biosynthesis-like domain-containing protein (288 aa).

Residue glutamate 46 is part of the active site.

The protein belongs to the PhzF family. As to quaternary structure, interacts with UNRIP/MAWD.

In Pongo abelii (Sumatran orangutan), this protein is Phenazine biosynthesis-like domain-containing protein (PBLD).